Consider the following 365-residue polypeptide: Histidinol-phosphate aminotransferase (365 aa).

The interval M1–P22 is disordered. K221 is modified (N6-(pyridoxal phosphate)lysine).

It belongs to the class-II pyridoxal-phosphate-dependent aminotransferase family. Histidinol-phosphate aminotransferase subfamily. As to quaternary structure, homodimer. Requires pyridoxal 5'-phosphate as cofactor.

It carries out the reaction L-histidinol phosphate + 2-oxoglutarate = 3-(imidazol-4-yl)-2-oxopropyl phosphate + L-glutamate. It functions in the pathway amino-acid biosynthesis; L-histidine biosynthesis; L-histidine from 5-phospho-alpha-D-ribose 1-diphosphate: step 7/9. The protein is Histidinol-phosphate aminotransferase of Rhodopseudomonas palustris (strain BisB5).